The sequence spans 214 residues: MATALNSKNASSNTAVHIEPKTGIAFPVKLDDGKSLNSVGLRKKSLLGMGIKVFGFGLYADNEKLKNLLKLKIGKSPAKPTEEMYQLVIDGDIGLTHKIVIAYSGLKMNMFKKAFSEALGESIMKLNGGRKNEELANKVLGPASDQIKLATGSEMEISKLPGYVLETKVHGELASRVESELLCRAYFGIYLGEITMECYKESKEMFGQSMLSLF.

The protein belongs to the chalcone isomerase family. In terms of tissue distribution, mostly expressed in glandular trichomes (lupulin glands), and, to a lower extent, in cones, cones bracts, leaves, stems and roots.

Its subcellular location is the cytoplasm. It catalyses the reaction a chalcone = a flavanone.. Its pathway is secondary metabolite biosynthesis; flavonoid biosynthesis. In terms of biological role, involved in the biosynthesis of prenylated phenolics natural products which contribute to the bitter taste of beer and display broad biological activities. Involved in anthocyanin biosynthesis. Polyketide binding proteins (PBP) which reduces the catalytic activities of CHS_H1 and PT1L and prevents demethylxanthohumol (DMX) production, by binding to DMX and naringenin chalcone (NC) to stabilize the chalconoids ring-opened structure. The sequence is that of Chalcone isomerase-like protein 1 from Humulus lupulus (European hop).